Consider the following 556-residue polypeptide: Serine beta-lactamase-like protein LACTB, mitochondrial (556 aa).

A mitochondrion-targeting transit peptide spans 1 to 117 (MYRLLSAVMA…RAIDSSRDLL (117 aa)). Serine 166 functions as the Acyl-ester intermediate in the catalytic mechanism. The segment covering 249-282 (ESDQEKELKEKGGKSNEKNDFAKAKVEQDNETKG) has biased composition (basic and acidic residues). The segment at 249–290 (ESDQEKELKEKGGKSNEKNDFAKAKVEQDNETKGRNSKPCKK) is disordered. Lysine 290 and lysine 291 each carry N6-succinyllysine. 2 positions are modified to N6-acetyllysine: lysine 304 and lysine 349.

This sequence belongs to the peptidase S12 family.

The protein resides in the mitochondrion. In terms of biological role, mitochondrial serine protease that acts as a regulator of mitochondrial lipid metabolism. Acts by decreasing protein levels of PISD, a mitochondrial enzyme that converts phosphatidylserine (PtdSer) to phosphatidylethanolamine (PtdEtn), thereby affecting mitochondrial lipid metabolism. It is unclear whether it acts directly by mediating proteolysis of PISD or by mediating proteolysis of another lipid metabolism protein. This is Serine beta-lactamase-like protein LACTB, mitochondrial from Bos taurus (Bovine).